The primary structure comprises 377 residues: Unsaturated glucuronyl hydrolase (377 aa).

D88 (nucleophile) is an active-site residue. D149 serves as the catalytic Proton donor.

This sequence belongs to the glycosyl hydrolase 88 family. As to quaternary structure, monomer.

Its subcellular location is the cytoplasm. It catalyses the reaction beta-D-Delta(4)-GlcA-(1-&gt;4)-beta-D-Glc-(1-&gt;4)-alpha-L-Rha-(1-&gt;3)-D-Glc + H2O = beta-D-Glc-(1-&gt;4)-alpha-L-Rha-(1-&gt;3)-D-Glc + 5-dehydro-4-deoxy-D-glucuronate. With respect to regulation, partially inhibited by divalent metal ions such as calcium, copper, iron and mercury. In terms of biological role, catalyzes the hydrolysis of oligosaccharides with unsaturated glucuronyl residues at the non-reducing terminal, to a sugar or an amino sugar, and an unsaturated D-glucuronic acid (GlcA), which is nonenzymatically converted immediately to alpha-keto acid. The chain is Unsaturated glucuronyl hydrolase (ugl) from Bacillus sp. (strain GL1).